We begin with the raw amino-acid sequence, 409 residues long: Histidine--tRNA ligase (409 aa).

Belongs to the class-II aminoacyl-tRNA synthetase family. As to quaternary structure, homodimer.

It is found in the cytoplasm. It carries out the reaction tRNA(His) + L-histidine + ATP = L-histidyl-tRNA(His) + AMP + diphosphate + H(+). The polypeptide is Histidine--tRNA ligase (Campylobacter fetus subsp. fetus (strain 82-40)).